We begin with the raw amino-acid sequence, 228 residues long: L-ribulose-5-phosphate 4-epimerase UlaF (228 aa).

Substrate contacts are provided by residues 26-27, 43-44, and 72-73; these read GN, SG, and SS. 3 residues coordinate Zn(2+): D74, H93, and H95. D118 serves as the catalytic Proton donor/acceptor. H167 contacts Zn(2+). Y225 functions as the Proton donor/acceptor in the catalytic mechanism.

The protein belongs to the aldolase class II family. AraD/FucA subfamily. Zn(2+) is required as a cofactor.

It carries out the reaction L-ribulose 5-phosphate = D-xylulose 5-phosphate. It functions in the pathway cofactor degradation; L-ascorbate degradation; D-xylulose 5-phosphate from L-ascorbate: step 4/4. Catalyzes the isomerization of L-ribulose 5-phosphate to D-xylulose 5-phosphate. Is involved in the anaerobic L-ascorbate utilization. In Shigella flexneri, this protein is L-ribulose-5-phosphate 4-epimerase UlaF.